The chain runs to 370 residues: Queuine tRNA-ribosyltransferase (370 aa).

The Proton acceptor role is filled by Asp-89. Residues 89–93 (DSGGF), Asp-143, Gln-187, and Gly-214 contribute to the substrate site. The segment at 245–251 (GVGTPED) is RNA binding. The active-site Nucleophile is the Asp-264. The interval 269–273 (TRNAR) is RNA binding; important for wobble base 34 recognition. Residues Cys-302, Cys-304, Cys-307, and His-333 each contribute to the Zn(2+) site.

It belongs to the queuine tRNA-ribosyltransferase family. As to quaternary structure, homodimer. Within each dimer, one monomer is responsible for RNA recognition and catalysis, while the other monomer binds to the replacement base PreQ1. Zn(2+) is required as a cofactor.

The enzyme catalyses 7-aminomethyl-7-carbaguanine + guanosine(34) in tRNA = 7-aminomethyl-7-carbaguanosine(34) in tRNA + guanine. Its pathway is tRNA modification; tRNA-queuosine biosynthesis. Catalyzes the base-exchange of a guanine (G) residue with the queuine precursor 7-aminomethyl-7-deazaguanine (PreQ1) at position 34 (anticodon wobble position) in tRNAs with GU(N) anticodons (tRNA-Asp, -Asn, -His and -Tyr). Catalysis occurs through a double-displacement mechanism. The nucleophile active site attacks the C1' of nucleotide 34 to detach the guanine base from the RNA, forming a covalent enzyme-RNA intermediate. The proton acceptor active site deprotonates the incoming PreQ1, allowing a nucleophilic attack on the C1' of the ribose to form the product. After dissociation, two additional enzymatic reactions on the tRNA convert PreQ1 to queuine (Q), resulting in the hypermodified nucleoside queuosine (7-(((4,5-cis-dihydroxy-2-cyclopenten-1-yl)amino)methyl)-7-deazaguanosine). This chain is Queuine tRNA-ribosyltransferase, found in Azoarcus sp. (strain BH72).